The chain runs to 610 residues: Elongation factor 4 (610 aa).

In terms of domain architecture, tr-type G spans 11–193 (EKIRNFSIIA…QIVEKVPAPT (183 aa)). Residues 23–28 (DHGKST) and 140–143 (NKID) each bind GTP.

This sequence belongs to the TRAFAC class translation factor GTPase superfamily. Classic translation factor GTPase family. LepA subfamily.

It localises to the cell membrane. The catalysed reaction is GTP + H2O = GDP + phosphate + H(+). Its function is as follows. Required for accurate and efficient protein synthesis under certain stress conditions. May act as a fidelity factor of the translation reaction, by catalyzing a one-codon backward translocation of tRNAs on improperly translocated ribosomes. Back-translocation proceeds from a post-translocation (POST) complex to a pre-translocation (PRE) complex, thus giving elongation factor G a second chance to translocate the tRNAs correctly. Binds to ribosomes in a GTP-dependent manner. In Streptococcus pyogenes serotype M49 (strain NZ131), this protein is Elongation factor 4.